A 445-amino-acid chain; its full sequence is MSRQKALIVDDEPDIRELLEITLGRMKLDTRSARNVKEARELLAREPFDLCLTDMRLPDGSGLDLVQYIQQRHPQTPVAMITAYGSLDTAIQALKAGAFDFLTKPVDLGRLRELVATALRLRNPEAEEAPVDNRLLGESPPMRALRNQIGKLARSQAPVYISGESGSGKELVARLIHEQGPRIERPFVPVNCGAIPSELMESEFFGHKKGSFTGAIEDKQGLFQAASGGTLFLDEVADLPMAMQVKLLRAIQEKAVRAVGGQQEVAVDVRILCATHKDLAAEVGAGRFRQDLYYRLNVIELRVPPLRERREDIPLLAERILKRLAGDTGLPAARLTGDAQEKLKNYRFPGNVRELENMLERAYTLCEDDQIQPHDLRLADAPGASQEGAASLSEIDNLEDYLEDIERKLIMQALEETRWNRTAAAQRLGLTFRSMRYRLKKLGID.

Positions 5 to 119 constitute a Response regulatory domain; it reads KALIVDDEPD…RLRELVATAL (115 aa). Aspartate 11 and aspartate 54 each carry 4-aspartylphosphate. Residues 135-364 form the Sigma-54 factor interaction domain; the sequence is LLGESPPMRA…LENMLERAYT (230 aa). ATP-binding positions include 163 to 170 and 226 to 235; these read GESGSGKE and ASGGTLFLDE. Residues 418 to 437 constitute a DNA-binding region (H-T-H motif); sequence RWNRTAAAQRLGLTFRSMRY.

In terms of processing, phosphorylated by PilS.

It localises to the cytoplasm. Member of the two-component regulatory system PilS/PilR that regulates the expression of multiple genes including the type IV pilus (T4P) major subunit PilA. Thereby, plays a major role in the regulation of multiple motility pathways. Upon appropriate environmental signals, the histidine kinase PilS transfers the phosphoryl group onto PilR. In turn, PilR functions as a transcriptional activator by direct binding to a cis-acting sequence upstream of the pilin gene promoter leading to its activation. This chain is Response regulator protein PilR (pilR), found in Pseudomonas aeruginosa (strain ATCC 15692 / DSM 22644 / CIP 104116 / JCM 14847 / LMG 12228 / 1C / PRS 101 / PAO1).